An 873-amino-acid polypeptide reads, in one-letter code: Actin-related protein 8 (873 aa).

Positions 108–129 are disordered; that stretch reads DEQVKPTSSTSSTSTTEEVEIK. Low complexity predominate over residues 114–123; that stretch reads TSSTSSTSTT. 368-371 is a binding site for ATP; that stretch reads DLGH. The segment covering 596 to 650 has biased composition (low complexity); that stretch reads NNNNNNNNSSSSSNNNNNNNNSGSNSNINSYNNNNNNNNNNNNNNNNNNNNSFNN. The tract at residues 596 to 701 is disordered; that stretch reads NNNNNNNNSS…TSSPTKKLKI (106 aa). A compositionally biased stretch (polar residues) spans 651-668; the sequence is VTIVTSTLNSNSTVPSTL. Low complexity predominate over residues 669-696; that stretch reads NSNSTVPSISNSNSTVPSTSTSTTSSPT. A coiled-coil region spans residues 762 to 804; that stretch reads FKQLEQQYQAQQLQFQQQLQQQQQQQQQLQQQLQNSTNSATTT.

It belongs to the actin family. ARP8 subfamily. In terms of assembly, component of the chromatin remodeling INO80 complex. Exists as monomers and dimers, but the dimer is most probably the biologically relevant form required for stable interactions with histones that exploits the twofold symmetry of the nucleosome core.

The protein localises to the nucleus. It localises to the cytoplasm. Its subcellular location is the cytoskeleton. In terms of biological role, plays an important role in the functional organization of mitotic chromosomes. Exhibits low basal ATPase activity, and unable to polymerize. Functionally, proposed core component of the chromatin remodeling INO80 complex which is involved in transcriptional regulation, DNA replication and probably DNA repair. Strongly prefer nucleosomes and H3-H4 tetramers over H2A-H2B dimers, suggesting it may act as a nucleosome recognition module within the complex. This chain is Actin-related protein 8, found in Dictyostelium discoideum (Social amoeba).